Consider the following 250-residue polypeptide: 3-deoxy-manno-octulosonate cytidylyltransferase (250 aa).

This sequence belongs to the KdsB family.

The protein resides in the cytoplasm. It catalyses the reaction 3-deoxy-alpha-D-manno-oct-2-ulosonate + CTP = CMP-3-deoxy-beta-D-manno-octulosonate + diphosphate. The protein operates within nucleotide-sugar biosynthesis; CMP-3-deoxy-D-manno-octulosonate biosynthesis; CMP-3-deoxy-D-manno-octulosonate from 3-deoxy-D-manno-octulosonate and CTP: step 1/1. It participates in bacterial outer membrane biogenesis; lipopolysaccharide biosynthesis. Functionally, activates KDO (a required 8-carbon sugar) for incorporation into bacterial lipopolysaccharide in Gram-negative bacteria. This chain is 3-deoxy-manno-octulosonate cytidylyltransferase, found in Xanthomonas campestris pv. campestris (strain 8004).